Reading from the N-terminus, the 316-residue chain is Pleckstrin homology domain-containing family F member 1 homolog (316 aa).

In terms of domain architecture, PH spans Val35 to Glu131. The FYVE-type zinc finger occupies Asp152–Lys212. Residues Cys158, Cys161, Cys175, Cys178, Cys183, Cys186, Cys204, and Cys207 each coordinate Zn(2+). Residues Pro215–Cys316 are disordered. Acidic residues predominate over residues Ser244–Thr253. Positions Ser279–Ser292 are enriched in low complexity. Positions Val298–Cys316 are enriched in polar residues.

Interacts with Gdi (Rab GDP dissociation inhibitor). In terms of tissue distribution, in ovaries, expressed both in the germ line cells and in the overlying somatic follicular epithelium.

Its subcellular location is the apical cell membrane. It localises to the endosome membrane. The protein resides in the cytoplasm. It is found in the cell cortex. Functionally, functions in the regulation of endosome morphology and late endosome formation. Has a role in controlling trafficking from early to late endosomes and from late endosomes to lysosomes. Important for localization of Gdi to the endosomal membranes. May function in controlling the activity of multiple regulators in the endocytic pathway, perhaps by positively controlling those involved in the early steps of endocytosis such as Rab5 and hrs, and negative regulating those involved in the late stages of endocytosis like car and VhaSFD. The sequence is that of Pleckstrin homology domain-containing family F member 1 homolog from Drosophila melanogaster (Fruit fly).